We begin with the raw amino-acid sequence, 120 residues long: NAD(P)H-quinone oxidoreductase subunit 3, chloroplastic (120 aa).

Transmembrane regions (helical) follow at residues 9-29 (IFWT…WISG), 64-84 (MFAL…PWAM), and 88-108 (VLGV…VVGL).

It belongs to the complex I subunit 3 family. In terms of assembly, NDH is composed of at least 16 different subunits, 5 of which are encoded in the nucleus.

It is found in the plastid. It localises to the chloroplast thylakoid membrane. It carries out the reaction a plastoquinone + NADH + (n+1) H(+)(in) = a plastoquinol + NAD(+) + n H(+)(out). The catalysed reaction is a plastoquinone + NADPH + (n+1) H(+)(in) = a plastoquinol + NADP(+) + n H(+)(out). NDH shuttles electrons from NAD(P)H:plastoquinone, via FMN and iron-sulfur (Fe-S) centers, to quinones in the photosynthetic chain and possibly in a chloroplast respiratory chain. The immediate electron acceptor for the enzyme in this species is believed to be plastoquinone. Couples the redox reaction to proton translocation, and thus conserves the redox energy in a proton gradient. The chain is NAD(P)H-quinone oxidoreductase subunit 3, chloroplastic from Brachypodium distachyon (Purple false brome).